Reading from the N-terminus, the 333-residue chain is MSQTNLLLLCGGGGDEHAISLLSANFFETSLADITGFNVLRVELDADGHYHTKDGDICELTNRKQIRFEDESKRPWPVDYVIPCIHGYPGETGDIQSYFELINLPYFGCDSEASRNCFNKVTAKMWFSALGIPNTPYIFLNEFNDDAISQTEQALETWGSVFIKAASQGSSVGCYRVDSIDELASSLKEAFSYSPYVVVEKTIHARELEVAAYELDGEIVATKPGEIICASNTFYTFDEKYAADSQAETKVEADISDELSREIREYAVKVFKGMKLSHLSRIDFFLTDENEILLNEINTFPGLTPISMFPKMLQNHGDDFTEYLYSNIKSQLI.

The ATP-grasp domain occupies 124–329; sequence KMWFSALGIP…FTEYLYSNIK (206 aa). 154–209 contacts ATP; it reads ALETWGSVFIKAASQGSSVGCYRVDSIDELASSLKEAFSYSPYVVVEKTIHARELE. Residues Asp-283, Glu-296, and Asn-298 each contribute to the Mg(2+) site.

It belongs to the D-alanine--D-alanine ligase family. Mg(2+) serves as cofactor. It depends on Mn(2+) as a cofactor.

Its subcellular location is the cytoplasm. It catalyses the reaction 2 D-alanine + ATP = D-alanyl-D-alanine + ADP + phosphate + H(+). It functions in the pathway cell wall biogenesis; peptidoglycan biosynthesis. Functionally, cell wall formation. The chain is D-alanine--D-alanine ligase from Shewanella sediminis (strain HAW-EB3).